Consider the following 100-residue polypeptide: Competence protein ComGE (100 aa).

Residues 15–35 traverse the membrane as a helical segment; sequence VILLEAVVALAIFASIATLLL.

In terms of assembly, the transformation pili are flexible filaments, consisting mainly of the major pilin ComGC and smaller amounts of the minor pilins, including at least ComGD, ComGF and ComGG, and perhaps ComGE. Interacts with ComGD. Interacts with ComGF. Interacts with ComGG.

Its subcellular location is the cell membrane. It localises to the cell surface. Functionally, required for formation of the type IV-like pilus (T4P) that plays a role in transformation. Transformation pili are dynamically extended and retracted, perhaps thereby promoting DNA uptake and transformation. Involved in transformation. Required for DNA binding. This Streptococcus pneumoniae (strain ATCC BAA-255 / R6) protein is Competence protein ComGE.